The sequence spans 238 residues: MAADGQCSLPASWRPVTLTHVEYPAGDLSGHLLAYLSLGPVFVIVGFVTLIIFKRELHTISFLGGLALNEGVNWLIKNVIQEPRPCGGPHTAVGTKYGMPSSHSQFMWFFSVYSFLFLYLRMHQTNNARFLDLLWRHVLSLGLLAAAFLVSYSRVYLLYHTWSQVLYGGIAGGLMAVAWFIFTQEVLTPLFPRIAAWPISEFFLIRDTSLIPNVLWFEYTVTRAEARNRQRKLGTKLQ.

4 helical membrane-spanning segments follow: residues 33–53, 100–120, 130–150, and 162–182; these read LAYL…LIIF, PSSH…FLYL, FLDL…AFLV, and WSQV…WFIF.

The protein belongs to the dolichyldiphosphatase family.

It is found in the endoplasmic reticulum membrane. It carries out the reaction a di-trans,poly-cis-dolichyl diphosphate + H2O = a di-trans,poly-cis-dolichyl phosphate + phosphate + H(+). It participates in protein modification; protein glycosylation. Functionally, required for efficient N-glycosylation. Necessary for maintaining optimal levels of dolichol-linked oligosaccharides. Hydrolyzes dolichyl pyrophosphate at a very high rate and dolichyl monophosphate at a much lower rate. Does not act on phosphatidate. In Plecturocebus moloch (Dusky titi monkey), this protein is Dolichyldiphosphatase 1 (DOLPP1).